The following is a 655-amino-acid chain: Fructose-1,6-bisphosphatase class 3 (655 aa).

It belongs to the FBPase class 3 family. Requires Mn(2+) as cofactor.

It carries out the reaction beta-D-fructose 1,6-bisphosphate + H2O = beta-D-fructose 6-phosphate + phosphate. It participates in carbohydrate biosynthesis; gluconeogenesis. The polypeptide is Fructose-1,6-bisphosphatase class 3 (Porphyromonas gingivalis (strain ATCC 33277 / DSM 20709 / CIP 103683 / JCM 12257 / NCTC 11834 / 2561)).